The primary structure comprises 476 residues: Cysteine--tRNA ligase (476 aa).

C27 lines the Zn(2+) pocket. The 'HIGH' region motif lies at 29 to 39 (ITPYDSVHVGH). Residues C213, H238, and E242 each coordinate Zn(2+). The short motif at 271-275 (KMSKS) is the 'KMSKS' region element. Residue K274 participates in ATP binding.

The protein belongs to the class-I aminoacyl-tRNA synthetase family. Zn(2+) serves as cofactor.

It localises to the cytoplasm. It catalyses the reaction tRNA(Cys) + L-cysteine + ATP = L-cysteinyl-tRNA(Cys) + AMP + diphosphate. This is Cysteine--tRNA ligase from Pyrobaculum arsenaticum (strain DSM 13514 / JCM 11321 / PZ6).